The chain runs to 310 residues: Putative F-box protein PP2-B2 (310 aa).

Residues 1 to 34 form a disordered region; sequence MIQSTMGHKQSVDSRGKGRKVPGSSSMVQKHRVE. The region spanning 44 to 90 is the F-box domain; that stretch reads PSLFDNLPEDCISNIISFTSPRDACVAASVSKTFESAVNSDSVWDKF.

The chain is Putative F-box protein PP2-B2 (PP2B2) from Arabidopsis thaliana (Mouse-ear cress).